The following is a 74-amino-acid chain: Small ribosomal subunit protein bS18 (74 aa).

Belongs to the bacterial ribosomal protein bS18 family. Part of the 30S ribosomal subunit. Forms a tight heterodimer with protein bS6.

In terms of biological role, binds as a heterodimer with protein bS6 to the central domain of the 16S rRNA, where it helps stabilize the platform of the 30S subunit. The polypeptide is Small ribosomal subunit protein bS18 (Zymomonas mobilis subsp. mobilis (strain ATCC 31821 / ZM4 / CP4)).